A 299-amino-acid polypeptide reads, in one-letter code: Very long chain fatty acid elongase 5 (299 aa).

Methionine 1 carries the post-translational modification N-acetylmethionine. A run of 7 helical transmembrane segments spans residues 26–46, 64–84, 112–132, 150–170, 172–192, 205–225, and 226–246; these read WFLLDNYIPTFICSVIYLLIV, ILVVYNLGLTLLSLYMFCELV, VLWWYYFSKLIEFMDTFFFIL, MLNIWWFVMNWVPCGHSYFGA, LNSFIHVLMYSYYGLSSVLSM, GQLLQSVLTIIQTSCGVIWPC, and TFPLGWLYFQIGYMISLIALF. A disordered region spans residues 262–299; sequence RKDHLKDHQNGSKAAVNGHTNSFSPLENNVKPRKLRKD. Over residues 279-288 the composition is skewed to polar residues; it reads GHTNSFSPLE. Residue serine 285 is modified to Phosphoserine.

The protein belongs to the ELO family. ELOVL5 subfamily. In terms of assembly, interacts with TECR.

The protein resides in the endoplasmic reticulum membrane. Its subcellular location is the cell projection. The protein localises to the dendrite. The catalysed reaction is a very-long-chain acyl-CoA + malonyl-CoA + H(+) = a very-long-chain 3-oxoacyl-CoA + CO2 + CoA. It catalyses the reaction (6Z,9Z,12Z)-octadecatrienoyl-CoA + malonyl-CoA + H(+) = (8Z,11Z,14Z)-3-oxoeicosatrienoyl-CoA + CO2 + CoA. The enzyme catalyses (9Z,12Z,15Z)-octadecatrienoyl-CoA + malonyl-CoA + H(+) = (11Z,14Z,17Z)-3-oxoeicosatrienoyl-CoA + CO2 + CoA. It carries out the reaction (9Z)-hexadecenoyl-CoA + malonyl-CoA + H(+) = 3-oxo-(11Z)-octadecenoyl-CoA + CO2 + CoA. The catalysed reaction is (9Z)-octadecenoyl-CoA + malonyl-CoA + H(+) = 3-oxo-(11Z)-eicosenoyl-CoA + CO2 + CoA. It catalyses the reaction (11Z)-octadecenoyl-CoA + malonyl-CoA + H(+) = 3-oxo-(13Z)-eicosenoyl-CoA + CO2 + CoA. The enzyme catalyses (9Z,12Z)-octadecadienoyl-CoA + malonyl-CoA + H(+) = (11Z,14Z)-3-oxoicosa-11,14-dienoyl-CoA + CO2 + CoA. It carries out the reaction (6Z,9Z,12Z,15Z)-octadecatetraenoyl-CoA + malonyl-CoA + H(+) = (8Z,11Z,14Z,17Z)-3-oxoicosatetraenoyl-CoA + CO2 + CoA. The catalysed reaction is (5Z,8Z,11Z,14Z)-eicosatetraenoyl-CoA + malonyl-CoA + H(+) = (7Z,10Z,13Z,16Z)-3-oxodocosatetraenoyl-CoA + CO2 + CoA. It catalyses the reaction (5Z,8Z,11Z,14Z,17Z)-eicosapentaenoyl-CoA + malonyl-CoA + H(+) = 3-oxo-(7Z,10Z,13Z,16Z,19Z)-docosapentaenoyl-CoA + CO2 + CoA. Its pathway is lipid metabolism; polyunsaturated fatty acid biosynthesis. In terms of biological role, catalyzes the first and rate-limiting reaction of the four reactions that constitute the long-chain fatty acids elongation cycle. This endoplasmic reticulum-bound enzymatic process allows the addition of 2 carbons to the chain of long- and very long-chain fatty acids (VLCFAs) per cycle. Condensing enzyme that acts specifically toward polyunsaturated acyl-CoA with the higher activity toward C18:3(n-6) acyl-CoA. May participate in the production of monounsaturated and of polyunsaturated VLCFAs of different chain lengths that are involved in multiple biological processes as precursors of membrane lipids and lipid mediators. In conditions where the essential linoleic and alpha linoleic fatty acids are lacking it is also involved in the synthesis of Mead acid from oleic acid. The sequence is that of Very long chain fatty acid elongase 5 from Pongo abelii (Sumatran orangutan).